A 449-amino-acid polypeptide reads, in one-letter code: CBL-interacting protein kinase 31 (449 aa).

One can recognise a Protein kinase domain in the interval 20–275; it reads YELGRTIGEG…ISQILEDPWF (256 aa). Residues 26–34 and Lys49 each bind ATP; that span reads IGEGTFAKV. Residue Asp143 is the Proton acceptor of the active site. Positions 161-190 are activation loop; it reads DFGLSALTEQVKADGLLHTTCGTPNYVAPE. One can recognise an NAF domain in the interval 313–337; sequence DQPTSMNAFELISLNQALNLDNLFE.

This sequence belongs to the protein kinase superfamily. CAMK Ser/Thr protein kinase family. SNF1 subfamily. As to quaternary structure, may interact with CBL3. Mn(2+) is required as a cofactor. Post-translationally, autophosphorylated. In terms of tissue distribution, highly expressed in leaf blade and leaf sheath, but not in other tissues.

The catalysed reaction is L-seryl-[protein] + ATP = O-phospho-L-seryl-[protein] + ADP + H(+). The enzyme catalyses L-threonyl-[protein] + ATP = O-phospho-L-threonyl-[protein] + ADP + H(+). Its function is as follows. Involved in cold stress tolerance. CIPK serine-threonine protein kinases interact with CBL proteins. Binding of a CBL protein to the regulatory NAF domain of CIPK protein lead to the activation of the kinase in a calcium-dependent manner. The polypeptide is CBL-interacting protein kinase 31 (CIPK31) (Oryza sativa subsp. japonica (Rice)).